A 227-amino-acid chain; its full sequence is Cytochrome c oxidase subunit 2 (227 aa).

Residues 1 to 26 (MATWSNLNLQNSSSPLMEQLIFFHDH) lie on the Mitochondrial intermembrane side of the membrane. The helical transmembrane segment at 27 to 48 (TLMILLMITVLVAYIMSMLFFN) threads the bilayer. Topologically, residues 49 to 62 (LYTNRFLLEGQTIE) are mitochondrial matrix. A helical membrane pass occupies residues 63 to 82 (IIWTILPAITLIFIALPSLR). Topologically, residues 83-227 (LLYLLDESMD…FINWIKNYSS (145 aa)) are mitochondrial intermembrane. Cu cation-binding residues include His160, Cys195, Glu197, Cys199, His203, and Met206. Glu197 is a Mg(2+) binding site.

It belongs to the cytochrome c oxidase subunit 2 family. As to quaternary structure, component of the cytochrome c oxidase (complex IV, CIV), a multisubunit enzyme composed of a catalytic core of 3 subunits and several supernumerary subunits. The complex exists as a monomer or a dimer and forms supercomplexes (SCs) in the inner mitochondrial membrane with ubiquinol-cytochrome c oxidoreductase (cytochrome b-c1 complex, complex III, CIII). The cofactor is Cu cation.

The protein localises to the mitochondrion inner membrane. It carries out the reaction 4 Fe(II)-[cytochrome c] + O2 + 8 H(+)(in) = 4 Fe(III)-[cytochrome c] + 2 H2O + 4 H(+)(out). Component of the cytochrome c oxidase, the last enzyme in the mitochondrial electron transport chain which drives oxidative phosphorylation. The respiratory chain contains 3 multisubunit complexes succinate dehydrogenase (complex II, CII), ubiquinol-cytochrome c oxidoreductase (cytochrome b-c1 complex, complex III, CIII) and cytochrome c oxidase (complex IV, CIV), that cooperate to transfer electrons derived from NADH and succinate to molecular oxygen, creating an electrochemical gradient over the inner membrane that drives transmembrane transport and the ATP synthase. Cytochrome c oxidase is the component of the respiratory chain that catalyzes the reduction of oxygen to water. Electrons originating from reduced cytochrome c in the intermembrane space (IMS) are transferred via the dinuclear copper A center (CU(A)) of subunit 2 and heme A of subunit 1 to the active site in subunit 1, a binuclear center (BNC) formed by heme A3 and copper B (CU(B)). The BNC reduces molecular oxygen to 2 water molecules using 4 electrons from cytochrome c in the IMS and 4 protons from the mitochondrial matrix. The sequence is that of Cytochrome c oxidase subunit 2 (COII) from Acheta domesticus (House cricket).